We begin with the raw amino-acid sequence, 660 residues long: Long chain acyl-CoA synthetase 1 (660 aa).

225–236 (IMYTSGTSGDPK) contributes to the ATP binding site. The fatty acid-binding stretch occupies residues 492–516 (DGWFHTGDIGEILPNGVLKIIDRKK).

The protein belongs to the ATP-dependent AMP-binding enzyme family. The cofactor is Mg(2+). In terms of tissue distribution, epidermal-specific expression along the entire stem. In cauline leaves, was expressed over the entire leaf surface, most strongly in trichomes and guard cells, but not in mesophyll cells. In flowers, the expression was detected in the stigma and filaments of the stamens, and in the carpel was expressed specifically in ovaries. In roots, was expressed in primary and lateral roots, but not in the root tips.

The protein resides in the endoplasmic reticulum. It carries out the reaction a long-chain fatty acid + ATP + CoA = a long-chain fatty acyl-CoA + AMP + diphosphate. The protein operates within lipid metabolism; fatty acid metabolism. Its function is as follows. Activation of long-chain fatty acids for both synthesis of cellular lipids, and degradation via beta-oxidation. Acts in both the wax and cutin pathways. Preferentially uses palmitate, palmitoleate, linoleate and eicosenoate. Seems to have a specific activity against very long-chain fatty acid (VLCFA) class with acids longer than 24 carbons (C(24)). This Arabidopsis thaliana (Mouse-ear cress) protein is Long chain acyl-CoA synthetase 1 (LACS1).